A 510-amino-acid chain; its full sequence is Maturase K (510 aa).

The protein belongs to the intron maturase 2 family. MatK subfamily.

It is found in the plastid. The protein resides in the chloroplast. Its function is as follows. Usually encoded in the trnK tRNA gene intron. Probably assists in splicing its own and other chloroplast group II introns. The polypeptide is Maturase K (Anomochloa marantoidea (Herbaceous bamboo)).